We begin with the raw amino-acid sequence, 72 residues long: uncharacterized protein (72 aa).

This is an uncharacterized protein from Dictyostelium discoideum (Social amoeba).